Consider the following 427-residue polypeptide: MSNIQTGAERMPHDLSHLGFLAGQIGRLITISTTPVIAGDSFEMDAVGALRLSPLRRGLAIDSTVDIFTFYVPHRHVYGEQWIKFMKDGVNATPLPTVNTTGYIDHAAFLGTINPDTNKIPKHLFQGYLNIYNNYFKAPWMPDRTEANPNELNQDDARYGFRCCHLKNIWTAPLPPETELSRQMTTSTTSIDIMGLQAAYANLHTDQERDYFMQRYHDVISSFGGKTSYDADNRPLLVMRSNLWASGYDVDGTDQTSLGQFSGRVQQTYKHSVPRFFVPEHGTMFTLALVRFPPTATKEIQYLNAKGALTYTDIAGDPVLYGNLPPREISMKDVFRSGDSSKKFKIAEGQWYRYAPSYVSPAYHLLEGFPFIQEPPSGDLQERVLIRHHDYDQCFQSVQLLQWNSQVKFNVTVYRNLPTTRDSIMTS.

Belongs to the microviridae F protein family. In terms of assembly, pentamerizes and interacts with H protein, G and B pentamers to form 12S pre-assembly complex. By binding with protein D, induces joining of twelve 12S complex to form the procapsid. The procapsid has an external scaffold made of 240 copies of protein D, 60 copies of the internally located B protein, and contains 60 copies of each of the viral structural proteins F and G. Upon genome packaging, interacts with protein J. The mature virion is composed of 60 copies each of the F, G, and J proteins, and 12 copies of the H protein.

It is found in the virion. Its function is as follows. Assembles to form an icosahedral capsid with a T=1 symmetry, about 30 nm in diameter, and consisting of 60 capsid proteins F. Upon virus binding to host cell, one of the spikes dissociates from the capsid and the virus interacts with LPS through the exposed EF loops on the F proteins. After the genome had been ejected, the channel formed by the F proteins at the unique fivefold axis remains open. The protein is Capsid protein F (F) of Enterobacteria phage phiX174 (Isolate Sanger).